Here is a 119-residue protein sequence, read N- to C-terminus: Fluoride-specific ion channel FluC 1 (119 aa).

Helical transmembrane passes span 6-26 (VALV…IAVV), 31-51 (FPWG…AIVY), 66-86 (VVAT…GETI), and 91-111 (RLAA…VLVA).

The protein belongs to the fluoride channel Fluc/FEX (TC 1.A.43) family.

The protein localises to the cell membrane. It catalyses the reaction fluoride(in) = fluoride(out). In terms of biological role, fluoride-specific ion channel. Important for reducing fluoride concentration in the cell, thus reducing its toxicity. The polypeptide is Fluoride-specific ion channel FluC 1 (Natronomonas pharaonis (strain ATCC 35678 / DSM 2160 / CIP 103997 / JCM 8858 / NBRC 14720 / NCIMB 2260 / Gabara) (Halobacterium pharaonis)).